Consider the following 190-residue polypeptide: UPF0301 protein PSPTO_5037 (190 aa).

It belongs to the UPF0301 (AlgH) family.

This chain is UPF0301 protein PSPTO_5037, found in Pseudomonas syringae pv. tomato (strain ATCC BAA-871 / DC3000).